A 422-amino-acid polypeptide reads, in one-letter code: KFYYHMYGATINRLNVFNGNCTVFTKLGHQGNMWMYAEVTVFVQNNITFEGIRGYSYTGDIAIDDVSLMEGICAGCKENLTDSFGHLHITYSAKFSPDCTWTIRNSSISEPVAIISIEEVQFAYCRGYIKVFDGSGAQIFTRRGCNENHTSNTFLEITFQESQNVTIQVSLENNQSYARFGYGILEGGLESALLLPGWNASLENKTSTSLQLRWMDISSWLRDGLRFFVVTAKSSYSNLTVKGLFSSNTTFAEISGLDPYMAYDVSVVAVDGDGSQFKSTVLQARTDEWVPSRAPSVFVTSVTSTSVTVQWNPLPQQYHNGRLLGYRVFIRKTANSPFPLDESNVAVYNTSWVTLNNLKPGQPYEVNVSAFTSKGDGPRSTHYIVTTAVCGKRPTHSTLNCRRHSSTHQRLALASNATDARW.

The 75-residue stretch at 1–75 (KFYYHMYGAT…VSLMEGICAG (75 aa)) folds into the MAM domain. 3 consecutive Fibronectin type-III domains span residues 2-74 (FYYH…GICA), 196-286 (PGWN…QART), and 291-386 (PSRA…YIVT).

As to expression, component of the acid-insoluble and acid-soluble organic matrix of the aragonitic skeleton (at protein level).

Its subcellular location is the secreted. In Acropora millepora (Staghorn coral), this protein is MAM and fibronectin type III domain-containing protein 1.